A 493-amino-acid chain; its full sequence is Ketol-acid reductoisomerase (NADP(+)) (493 aa).

One can recognise a KARI N-terminal Rossmann domain in the interval 14-208 (LDQLGRCRFM…GGHRAGVLES (195 aa)). Residues 45-48 (CGAQ), Arg-68, Arg-76, Ser-78, and 108-110 (DKQ) contribute to the NADP(+) site. Residue His-132 is part of the active site. Residue Gly-158 participates in NADP(+) binding. KARI C-terminal knotted domains lie at 209–345 (SFVA…APKG) and 346–486 (ENIK…MTDM). 4 residues coordinate Mg(2+): Asp-217, Glu-221, Glu-390, and Glu-394. Ser-415 contributes to the substrate binding site.

This sequence belongs to the ketol-acid reductoisomerase family. Requires Mg(2+) as cofactor.

It catalyses the reaction (2R)-2,3-dihydroxy-3-methylbutanoate + NADP(+) = (2S)-2-acetolactate + NADPH + H(+). The enzyme catalyses (2R,3R)-2,3-dihydroxy-3-methylpentanoate + NADP(+) = (S)-2-ethyl-2-hydroxy-3-oxobutanoate + NADPH + H(+). The protein operates within amino-acid biosynthesis; L-isoleucine biosynthesis; L-isoleucine from 2-oxobutanoate: step 2/4. Its pathway is amino-acid biosynthesis; L-valine biosynthesis; L-valine from pyruvate: step 2/4. Its function is as follows. Involved in the biosynthesis of branched-chain amino acids (BCAA). Catalyzes an alkyl-migration followed by a ketol-acid reduction of (S)-2-acetolactate (S2AL) to yield (R)-2,3-dihydroxy-isovalerate. In the isomerase reaction, S2AL is rearranged via a Mg-dependent methyl migration to produce 3-hydroxy-3-methyl-2-ketobutyrate (HMKB). In the reductase reaction, this 2-ketoacid undergoes a metal-dependent reduction by NADPH to yield (R)-2,3-dihydroxy-isovalerate. This Histophilus somni (strain 129Pt) (Haemophilus somnus) protein is Ketol-acid reductoisomerase (NADP(+)).